A 440-amino-acid chain; its full sequence is Phosphatidylcholine-sterol acyltransferase (440 aa).

Positions 1–24 are cleaved as a signal peptide; the sequence is MGPPGSPWQWVPLLLGLLLPPAAP. A glycan (N-linked (GlcNAc...) asparagine) is linked at N44. C74 and C98 are joined by a disulfide. Residue N108 is glycosylated (N-linked (GlcNAc...) asparagine). S205 functions as the Nucleophile in the catalytic mechanism. N296 carries an N-linked (GlcNAc...) asparagine glycan. A disulfide bridge connects residues C337 and C380. Catalysis depends on charge relay system residues D369 and H401. A glycan (N-linked (GlcNAc...) asparagine) is linked at N408.

Belongs to the AB hydrolase superfamily. Lipase family. Most abundant in liver and cerebellum.

The protein resides in the secreted. The enzyme catalyses a sterol + a 1,2-diacyl-sn-glycero-3-phosphocholine = a sterol ester + a 1-acyl-sn-glycero-3-phosphocholine. Its activity is regulated as follows. APOA1 is the most potent activator in plasma. Also activated by APOE, APOC1 and APOA4. Central enzyme in the extracellular metabolism of plasma lipoproteins. Synthesized mainly in the liver and secreted into plasma where it converts cholesterol and phosphatidylcholines (lecithins) to cholesteryl esters and lysophosphatidylcholines on the surface of high and low density lipoproteins (HDLs and LDLs). The cholesterol ester is then transported back to the liver. Has a preference for plasma 16:0-18:2 or 18:O-18:2 phosphatidylcholines. Also produced in the brain by primary astrocytes, and esterifies free cholesterol on nascent APOE-containing lipoproteins secreted from glia and influences cerebral spinal fluid (CSF) APOE- and APOA1 levels. Together with APOE and the cholesterol transporter ABCA1, plays a key role in the maturation of glial-derived, nascent lipoproteins. Required for remodeling high-density lipoprotein particles into their spherical forms. In Papio anubis (Olive baboon), this protein is Phosphatidylcholine-sterol acyltransferase (LCAT).